A 453-amino-acid polypeptide reads, in one-letter code: MLTENSAVNSGGKSKCEAGACESRVNGDATSVMDLMAVSTSATGQDEFDRNAPRICGVCGDKATGFHFNAMTCEGCKGFFRRSMKRKASFTCPFNGNCTITKDNRRHCQACRLKRCIDIGMMKEFILTDEEVQRKKDLIMKRKEEEAAREARKPRLSDEQMQIINSLVEAHHKTYDDSYSDFVRFRPPVREGPVTRSASRAASLHSLSDASSDSFNHSPESVDTKLNFSNLLMMYQDSGSPDSSEEDQQSRLSMLPHLADLVSYSIQKVIGFAKMIPGFRDLTAEDQIALLKSSAIEIIMLRSNQSFSLEDMSWSCGGPDFKYCINDVTKAGHTLELLEPLVKFQVGLKKLKLHEEEHVLLMAICLLSPDRPGVQDHVRIEALQDRLCDVLQAYIRIQHPGGRLLYAKMIQKLADLRSLNEEHSKQYRSLSFQPEHSMQLTPLVLEVFGSEVS.

The nuclear receptor DNA-binding region spans Pro53–Thr128. 8 residues coordinate Zn(2+): Cys56, Cys59, Cys73, Cys76, Cys92, Cys98, Cys108, and Cys111. NR C4-type zinc fingers lie at residues Cys56–Cys76 and Cys92–Cys111. The tract at residues Asp129 to Asp158 is hinge. The region spanning Glu159–Gly449 is the NR LBD domain. 2 residues coordinate calcitriol: Tyr175 and Ser265. Residues Lys274 to Lys292 form an interaction with coactivator LXXLL motif region. Residues Arg302, Ser306, His333, and His423 each contribute to the calcitriol site. Positions Pro442–Ser450 match the 9aaTAD motif.

Belongs to the nuclear hormone receptor family. NR1 subfamily. In terms of assembly, homodimer in the absence of bound vitamin D3. Heterodimer with RXRA after vitamin D3 binding. Interacts with ncoa1 and possibly other coactivators, leading to a strong increase of transcription of target genes. In terms of tissue distribution, detected in embryo 24 to 48 hours after fertilization and in gastrula.

It is found in the nucleus. Its subcellular location is the cytoplasm. In terms of biological role, nuclear receptor for calcitriol, the active form of vitamin D3 which mediates the action of this vitamin on cells. Enters the nucleus upon vitamin D3 binding where it forms heterodimers with the retinoid X receptor/RXR. The VDR-RXR heterodimers bind to specific response elements on DNA and activate the transcription of vitamin D3-responsive target genes. Recruited to promoters via its interaction with BAZ1B/WSTF which mediates the interaction with acetylated histones, an essential step for VDR-promoter association. Plays a central role in calcium homeostasis. The chain is Vitamin D3 receptor A (vdra) from Danio rerio (Zebrafish).